A 220-amino-acid chain; its full sequence is UPF0502 protein VVA1225 (220 aa).

Belongs to the UPF0502 family.

The chain is UPF0502 protein VVA1225 from Vibrio vulnificus (strain YJ016).